We begin with the raw amino-acid sequence, 92 residues long: Large ribosomal subunit protein bL27 (92 aa).

Residues 1–20 (MAHKKAGGSTRNGRDSNPKY) are disordered.

This sequence belongs to the bacterial ribosomal protein bL27 family.

In Legionella pneumophila (strain Paris), this protein is Large ribosomal subunit protein bL27.